The primary structure comprises 244 residues: Glucosamine-6-phosphate deaminase (244 aa).

Asp67 functions as the Proton acceptor; for enolization step in the catalytic mechanism. The For ring-opening step role is filled by Asn136. The active-site Proton acceptor; for ring-opening step is His138. Residue Glu143 is the For ring-opening step of the active site.

It belongs to the glucosamine/galactosamine-6-phosphate isomerase family. NagB subfamily.

It carries out the reaction alpha-D-glucosamine 6-phosphate + H2O = beta-D-fructose 6-phosphate + NH4(+). It participates in amino-sugar metabolism; N-acetylneuraminate degradation; D-fructose 6-phosphate from N-acetylneuraminate: step 5/5. Its function is as follows. Catalyzes the reversible isomerization-deamination of glucosamine 6-phosphate (GlcN6P) to form fructose 6-phosphate (Fru6P) and ammonium ion. The protein is Glucosamine-6-phosphate deaminase of Clostridium botulinum (strain Okra / Type B1).